The sequence spans 374 residues: tRNA 2-selenouridine synthase (374 aa).

In terms of domain architecture, Rhodanese spans 12 to 136 (FLRDVPMLDT…MRGFLLQTID (125 aa)). Catalysis depends on Cys95, which acts as the S-selanylcysteine intermediate.

It belongs to the SelU family. Monomer.

It catalyses the reaction 5-methylaminomethyl-2-thiouridine(34) in tRNA + selenophosphate + (2E)-geranyl diphosphate + H2O + H(+) = 5-methylaminomethyl-2-selenouridine(34) in tRNA + (2E)-thiogeraniol + phosphate + diphosphate. It carries out the reaction 5-methylaminomethyl-2-thiouridine(34) in tRNA + (2E)-geranyl diphosphate = 5-methylaminomethyl-S-(2E)-geranyl-thiouridine(34) in tRNA + diphosphate. The catalysed reaction is 5-methylaminomethyl-S-(2E)-geranyl-thiouridine(34) in tRNA + selenophosphate + H(+) = 5-methylaminomethyl-2-(Se-phospho)selenouridine(34) in tRNA + (2E)-thiogeraniol. The enzyme catalyses 5-methylaminomethyl-2-(Se-phospho)selenouridine(34) in tRNA + H2O = 5-methylaminomethyl-2-selenouridine(34) in tRNA + phosphate. Involved in the post-transcriptional modification of the uridine at the wobble position (U34) of tRNA(Lys), tRNA(Glu) and tRNA(Gln). Catalyzes the conversion of 2-thiouridine (S2U-RNA) to 2-selenouridine (Se2U-RNA). Acts in a two-step process involving geranylation of 2-thiouridine (S2U) to S-geranyl-2-thiouridine (geS2U) and subsequent selenation of the latter derivative to 2-selenouridine (Se2U) in the tRNA chain. This chain is tRNA 2-selenouridine synthase, found in Bordetella petrii (strain ATCC BAA-461 / DSM 12804 / CCUG 43448).